We begin with the raw amino-acid sequence, 489 residues long: Glycogen synthase (489 aa).

Arginine 20 contacts ADP-alpha-D-glucose.

This sequence belongs to the glycosyltransferase 1 family. Bacterial/plant glycogen synthase subfamily.

It carries out the reaction [(1-&gt;4)-alpha-D-glucosyl](n) + ADP-alpha-D-glucose = [(1-&gt;4)-alpha-D-glucosyl](n+1) + ADP + H(+). Its pathway is glycan biosynthesis; glycogen biosynthesis. Its function is as follows. Synthesizes alpha-1,4-glucan chains using ADP-glucose. This is Glycogen synthase from Chlorobium limicola (strain DSM 245 / NBRC 103803 / 6330).